The primary structure comprises 179 residues: Large ribosomal subunit protein uL5 (179 aa).

Belongs to the universal ribosomal protein uL5 family. In terms of assembly, part of the 50S ribosomal subunit; part of the 5S rRNA/L5/L18/L25 subcomplex. Contacts the 5S rRNA and the P site tRNA. Forms a bridge to the 30S subunit in the 70S ribosome.

Its function is as follows. This is one of the proteins that bind and probably mediate the attachment of the 5S RNA into the large ribosomal subunit, where it forms part of the central protuberance. In the 70S ribosome it contacts protein S13 of the 30S subunit (bridge B1b), connecting the 2 subunits; this bridge is implicated in subunit movement. Contacts the P site tRNA; the 5S rRNA and some of its associated proteins might help stabilize positioning of ribosome-bound tRNAs. This chain is Large ribosomal subunit protein uL5, found in Shewanella pealeana (strain ATCC 700345 / ANG-SQ1).